We begin with the raw amino-acid sequence, 607 residues long: ATP-dependent zinc metalloprotease FtsH 2 (607 aa).

Residues 1–2 lie on the Cytoplasmic side of the membrane; that stretch reads MR. A helical transmembrane segment spans residues 3–23; that stretch reads SLWIVLVLVLGSALLLQVMAA. The Periplasmic portion of the chain corresponds to 24 to 99; it reads SDDRIPYARF…PYTRVADELG (76 aa). A helical membrane pass occupies residues 100-120; sequence LPPYLWLLLPLAGLAAMGHLA. The Cytoplasmic portion of the chain corresponds to 121 to 607; it reads SRRATTAGTI…LREMVASGEA (487 aa). Residue 195-202 participates in ATP binding; it reads GPPGTGKT. Histidine 418 contacts Zn(2+). The active site involves glutamate 419. Positions 422 and 495 each coordinate Zn(2+).

The protein in the central section; belongs to the AAA ATPase family. It in the C-terminal section; belongs to the peptidase M41 family. In terms of assembly, homohexamer. Zn(2+) is required as a cofactor.

Its subcellular location is the cell inner membrane. Its function is as follows. Acts as a processive, ATP-dependent zinc metallopeptidase for both cytoplasmic and membrane proteins. Plays a role in the quality control of integral membrane proteins. The polypeptide is ATP-dependent zinc metalloprotease FtsH 2 (Sorangium cellulosum (strain So ce56) (Polyangium cellulosum (strain So ce56))).